The sequence spans 540 residues: Chaperonin GroEL (540 aa).

Residues 30 to 33 (TLGP), lysine 51, 87 to 91 (DGTTT), glycine 415, 479 to 481 (NAA), and aspartate 495 contribute to the ATP site.

It belongs to the chaperonin (HSP60) family. Forms a cylinder of 14 subunits composed of two heptameric rings stacked back-to-back. Interacts with the co-chaperonin GroES.

It localises to the cytoplasm. The catalysed reaction is ATP + H2O + a folded polypeptide = ADP + phosphate + an unfolded polypeptide.. Its function is as follows. Together with its co-chaperonin GroES, plays an essential role in assisting protein folding. The GroEL-GroES system forms a nano-cage that allows encapsulation of the non-native substrate proteins and provides a physical environment optimized to promote and accelerate protein folding. In Raoultella planticola (Klebsiella planticola), this protein is Chaperonin GroEL.